Consider the following 349-residue polypeptide: Achromobactin transport system permease protein CbrC (349 aa).

The next 10 helical transmembrane spans lie at 32–52 (LALL…KLML), 82–102 (VLAA…QAMI), 111–131 (ILGI…FLAA), 138–158 (LPLA…WLAW), 168–188 (VLTG…MLVF), 190–210 (PLTT…GASW), 216–236 (LGGW…QVRV), 263–283 (VALA…GLIA), 290–310 (LVAP…AGLV), and 325–345 (DLPA…YLLI).

This sequence belongs to the binding-protein-dependent transport system permease family. FecCD subfamily.

It localises to the cell inner membrane. Its function is as follows. Part of the binding-protein-dependent transport system CbrABCD for uptake of the siderophore achromobactin. Probably responsible for the translocation of the substrate across the membrane. This Dickeya dadantii (strain 3937) (Erwinia chrysanthemi (strain 3937)) protein is Achromobactin transport system permease protein CbrC (cbrC).